The following is a 338-amino-acid chain: Putative transposase for insertion sequence element IS4SA (338 aa).

This sequence belongs to the transposase 11 family.

In Synechocystis sp. (strain ATCC 27184 / PCC 6803 / Kazusa), this protein is Putative transposase for insertion sequence element IS4SA.